Here is a 772-residue protein sequence, read N- to C-terminus: Semaphorin-3A (772 aa).

The N-terminal stretch at 1-20 (MGWFTGIACLFWGVLLTARA) is a signal peptide. In terms of domain architecture, Sema spans 31–514 (RLKLSYKEML…STAGVAQLPL (484 aa)). N-linked (GlcNAc...) asparagine glycosylation occurs at N53. C103 and C114 form a disulfide bridge. An N-linked (GlcNAc...) asparagine glycan is attached at N125. Cystine bridges form between C132–C141, C269–C381, C293–C341, and C517–C535. In terms of domain architecture, Ig-like C2-type spans 579–665 (PSLEERIIYG…GFMQTLLKVT (87 aa)). A glycan (N-linked (GlcNAc...) asparagine) is linked at N591. An intrachain disulfide couples C650 to C723. The segment covering 729–738 (RDRKQRRQRP) has biased composition (basic residues). The tract at residues 729 to 772 (RDRKQRRQRPGHSQGSSNKWKHMQESKKGRNRRTHEFERAPRSV) is disordered. Residues 750–772 (HMQESKKGRNRRTHEFERAPRSV) show a composition bias toward basic and acidic residues.

It belongs to the semaphorin family. As to quaternary structure, interacts with PXND1.

It is found in the secreted. Plays a role in growth cones guidance. May function to pattern sensory projections by selectively repelling axons that normally terminate dorsally. Involved in the development of the olfactory system and in neuronal control of puberty. The polypeptide is Semaphorin-3A (Sema3a) (Mus musculus (Mouse)).